Reading from the N-terminus, the 286-residue chain is 4-diphosphocytidyl-2-C-methyl-D-erythritol kinase (286 aa).

Residue K12 is part of the active site. Residue 96 to 106 coordinates ATP; that stretch reads PHGAGLGGGSA. D138 is an active-site residue.

Belongs to the GHMP kinase family. IspE subfamily.

It carries out the reaction 4-CDP-2-C-methyl-D-erythritol + ATP = 4-CDP-2-C-methyl-D-erythritol 2-phosphate + ADP + H(+). The protein operates within isoprenoid biosynthesis; isopentenyl diphosphate biosynthesis via DXP pathway; isopentenyl diphosphate from 1-deoxy-D-xylulose 5-phosphate: step 3/6. Catalyzes the phosphorylation of the position 2 hydroxy group of 4-diphosphocytidyl-2C-methyl-D-erythritol. This chain is 4-diphosphocytidyl-2-C-methyl-D-erythritol kinase, found in Nitratidesulfovibrio vulgaris (strain DP4) (Desulfovibrio vulgaris).